Reading from the N-terminus, the 443-residue chain is Threonine/serine transporter TdcC (443 aa).

11 helical membrane-spanning segments follow: residues 22 to 42, 44 to 64, 97 to 117, 140 to 160, 163 to 183, 207 to 227, 261 to 281, 312 to 332, 366 to 386, 389 to 409, and 423 to 443; these read TTWT…FFPI, AGFG…PIAF, GVVI…IYGV, FVAL…KDLM, VMSY…LSLI, ILIT…FSPI, MLMV…LSPA, AITL…KSFF, ISMI…PNIL, IEAM…MYAI, and DNVF…YKLF.

The protein belongs to the amino acid/polyamine transporter 2 family. SdaC/TdcC subfamily.

Its subcellular location is the cell inner membrane. The enzyme catalyses L-threonine(in) + H(+)(in) = L-threonine(out) + H(+)(out). The catalysed reaction is L-serine(in) + H(+)(in) = L-serine(out) + H(+)(out). Functionally, involved in the import of threonine and serine into the cell, with the concomitant import of a proton (symport system). This Escherichia coli O45:K1 (strain S88 / ExPEC) protein is Threonine/serine transporter TdcC.